Reading from the N-terminus, the 577-residue chain is Putative laccase-1 (577 aa).

The signal sequence occupies residues 1-28 (MGTAKIPALLWFLLAGLVLALAVNPAHG). 2 Plastocyanin-like domains span residues 37–153 (FITE…PKRG) and 163–316 (KEIP…YTDS). Asn42 and Asn83 each carry an N-linked (GlcNAc...) asparagine glycan. The Cu cation site is built by His87 and His89. An N-linked (GlcNAc...) asparagine glycan is attached at Asn115. Cu cation is bound by residues His132 and His134. N-linked (GlcNAc...) asparagine glycans are attached at residues Asn276, Asn304, Asn382, and Asn402. The Plastocyanin-like 3 domain occupies 442–561 (DINGGGPLLT…DTMFIVKDGK (120 aa)). Cu cation is bound by residues His478, His481, His483, His540, Cys541, His542, His546, and Met551.

It belongs to the multicopper oxidase family. Requires Cu cation as cofactor.

The protein localises to the secreted. The protein resides in the extracellular space. It is found in the apoplast. It catalyses the reaction 4 hydroquinone + O2 = 4 benzosemiquinone + 2 H2O. Its function is as follows. Lignin degradation and detoxification of lignin-derived products. The polypeptide is Putative laccase-1 (LAC1) (Oryza sativa subsp. japonica (Rice)).